The sequence spans 559 residues: Germacrene A synthase 1 (559 aa).

5 residues coordinate Mg(2+): aspartate 312, aspartate 316, aspartate 456, threonine 460, and glutamate 464. The short motif at 312-316 is the DDXXD motif element; sequence DDTYD.

This sequence belongs to the terpene synthase family. Monomer. Mg(2+) is required as a cofactor. Mainly expressed in sunflower trichomes.

It catalyses the reaction (2E,6E)-farnesyl diphosphate = (+)-(R)-germacrene A + diphosphate. Its pathway is secondary metabolite biosynthesis; terpenoid biosynthesis. Functionally, sesquiterpene synthase involved in germacrene A biosynthesis. Germacrene A is a precursor of several sesquiterpene lactones. The protein is Germacrene A synthase 1 of Helianthus annuus (Common sunflower).